The following is a 405-amino-acid chain: Phosphatidylinositol 5-phosphate 4-kinase type-2 alpha (405 aa).

The 373-residue stretch at 32 to 404 folds into the PIPK domain; that stretch reads ASDPLLSVLM…RFLDFIANIL (373 aa). The segment at 287–326 is disordered; the sequence is QEEVECEENDGEDEGESDGTHPIGTPPDSPGNTLNSSLPL. Over residues 288–303 the composition is skewed to acidic residues; sequence EEVECEENDGEDEGES.

Homodimer. Phosphorylated in tyrosines. Phosphorylation is induced by light and increases kinase activity.

It is found in the cell membrane. It localises to the nucleus. The protein localises to the lysosome. The protein resides in the cytoplasm. It carries out the reaction a 1,2-diacyl-sn-glycero-3-phospho-(1D-myo-inositol-5-phosphate) + ATP = a 1,2-diacyl-sn-glycero-3-phospho-(1D-myo-inositol-4,5-bisphosphate) + ADP + H(+). The enzyme catalyses 1,2-dihexadecanoyl-sn-glycero-3-phospho-(1D-myo-inositol-5-phosphate) + ATP = 1,2-dihexadecanoyl-sn-glycero-3-phospho-(1D-myo-inositol-4,5-bisphosphate) + ADP + H(+). It catalyses the reaction 1,2-dihexadecanoyl-sn-glycero-3-phospho-(1D-myo-inositol-5-phosphate) + GTP = 1,2-dihexadecanoyl-sn-glycero-3-phospho-(1D-myo-inositol-4,5-bisphosphate) + GDP + H(+). Its activity is regulated as follows. In rod outer segments, activated by light. Catalyzes the phosphorylation of phosphatidylinositol 5-phosphate (PtdIns5P) on the fourth hydroxyl of the myo-inositol ring, to form phosphatidylinositol 4,5-bisphosphate (PtdIns(4,5)P2). Has both ATP- and GTP-dependent kinase activities. In Gallus gallus (Chicken), this protein is Phosphatidylinositol 5-phosphate 4-kinase type-2 alpha (PIP4K2A).